Reading from the N-terminus, the 1466-residue chain is ABC transporter G family member 40 (1466 aa).

The interval 1-21 is disordered; it reads MSHRHHAALVASASGRSPSWG. The ABC transporter 1 domain occupies 176–449; it reads GLIGQFGSSN…FEASGFRCPQ (274 aa). 209–216 is a binding site for ATP; sequence GPPSSGKS. The ABC transmembrane type-2 1 domain maps to 527-740; the sequence is ESLKAVLCRE…SQNAISINEF (214 aa). Transmembrane regions (helical) follow at residues 545–565, 581–601, 633–653, 664–684, 690–710, and 776–796; these read FLYIFKVTQLIILAFLSMTVF, FLGALTFNLITVMFNGLSELN, VPVSLVEATVWVVITYYVMGF, FLAFFVTHLMAMALFRFLGAI, IAISFGMLVLLIVFVFGGFVI, and FWLSIGALVGFIILFNTLYIL. The span at 821-831 shows a compositional bias: basic and acidic residues; the sequence is YTETRNEEHRS. Positions 821–851 are disordered; that stretch reads YTETRNEEHRSRTSTTTSSIPTSANGEGNRP. Residues 833–843 show a composition bias toward low complexity; that stretch reads TSTTTSSIPTS. The ABC transporter 2 domain maps to 865–1117; sequence LCFNHLNYYV…KLVEYFETIL (253 aa). Residue 910-917 participates in ATP binding; sequence GVSGAGKT. An ABC transmembrane type-2 2 domain is found at 1190 to 1404; it reads IQCVANLWKQ…TIYGVIASQF (215 aa). 7 helical membrane passes run 1209–1229, 1241–1261, 1297–1317, 1327–1347, 1355–1375, 1396–1416, and 1435–1455; these read YNSLRYLTTFLYGLFFGTVFW, LYNLLGATYAAIFFIGATNCM, FIYNIIQGILYTVIIYAMIGY, FLFFIVSSFNYFTFFGMMLVA, ANILITFALPLWNLFAGFLIF, IYGVIASQFGGNGGSISVPGG, and FLGYVILAHFGFMAAFVLIFG.

Belongs to the ABC transporter superfamily. ABCG family. PDR (TC 3.A.1.205) subfamily.

Its subcellular location is the membrane. The chain is ABC transporter G family member 40 from Oryza sativa subsp. japonica (Rice).